The chain runs to 326 residues: Peroxidase 39 (326 aa).

Positions 1–23 (MTRFGLALLMILVIQGLVTFSEA) are cleaved as a signal peptide. Disulfide bonds link cysteine 34-cysteine 114, cysteine 67-cysteine 72, cysteine 120-cysteine 322, and cysteine 199-cysteine 232. Residue histidine 65 is the Proton acceptor of the active site. Positions 66, 69, 71, 73, and 75 each coordinate Ca(2+). An N-linked (GlcNAc...) asparagine glycan is attached at asparagine 79. Proline 162 is a substrate binding site. N-linked (GlcNAc...) asparagine glycosylation is present at asparagine 167. Histidine 192 is a heme b binding site. Threonine 193 lines the Ca(2+) pocket. 2 N-linked (GlcNAc...) asparagine glycosylation sites follow: asparagine 208 and asparagine 238. Positions 245, 248, and 253 each coordinate Ca(2+).

The protein belongs to the peroxidase family. Classical plant (class III) peroxidase subfamily. Heme b serves as cofactor. Requires Ca(2+) as cofactor. Slightly expressed in roots.

It localises to the secreted. It catalyses the reaction 2 a phenolic donor + H2O2 = 2 a phenolic radical donor + 2 H2O. Functionally, removal of H(2)O(2), oxidation of toxic reductants, biosynthesis and degradation of lignin, suberization, auxin catabolism, response to environmental stresses such as wounding, pathogen attack and oxidative stress. These functions might be dependent on each isozyme/isoform in each plant tissue. The sequence is that of Peroxidase 39 (PER39) from Arabidopsis thaliana (Mouse-ear cress).